Reading from the N-terminus, the 489-residue chain is Dipeptide and tripeptide permease B (489 aa).

Residues 1 to 27 (MNKPASIGLLQQPKPFFMIFFVELWER) are Cytoplasmic-facing. The helical transmembrane segment at 28–48 (FGYYGVQGILAVYFVHKLGFS) threads the bilayer. Over 49–52 (QEQA) the chain is Periplasmic. Residues 53 to 73 (FTTFGAFAALVYGLIAIGGYV) form a helical membrane-spanning segment. Over 74–82 (GDHLLGTKR) the chain is Cytoplasmic. The helical transmembrane segment at 83–103 (TIVLGAIVLTVGYFMTGLSIL) threads the bilayer. Residues 104 to 106 (KPE) are Periplasmic-facing. The helical transmembrane segment at 107-127 (LIFYALGTIAVGNGLFKANPA) threads the bilayer. The Cytoplasmic segment spans residues 128–146 (SLLSKCYPPKDPRLDGAFT). A helical membrane pass occupies residues 147 to 167 (LFYMSINIGSLFSLAIAPVIA). The Periplasmic segment spans residues 168 to 171 (EKFG). The chain crosses the membrane as a helical span at residues 172 to 192 (YAVTYNICGIGLIIALLVYVL). At 193–212 (YRNTVRNIGSEPDHRPINYK) the chain is on the cytoplasmic side. The next 2 membrane-spanning stretches (helical) occupy residues 213–233 (NLLL…WLMH) and 234–254 (NVKI…FIFF). Over 255 to 267 (REAFKQDKVGRNK) the chain is Cytoplasmic. Residues 268 to 288 (MFVAFILMLQAIVFFILYAQM) traverse the membrane as a helical segment. At 289 to 311 (PTSLNFFAINNVHHQLLGFNINP) the chain is on the periplasmic side. Residues 312–332 (VSFQALNPFWIVVASPILAAL) traverse the membrane as a helical segment. Over 333–350 (YTHWGSRSKDLTMPAKFT) the chain is Cytoplasmic. A helical transmembrane segment spans residues 351-371 (VGMFLCSLGFLTAAAAGLWFA). Over 372–375 (DEQG) the chain is Periplasmic. Residues 376 to 396 (LTSPWFIVLVYLFQSLGELMI) form a helical membrane-spanning segment. Residues 397-419 (SALGLAMVAALVPQYLMGFILGM) lie on the Cytoplasmic side of the membrane. A helical membrane pass occupies residues 420-440 (WYLTQATSFLLGGYVAAFTAI). Topologically, residues 441 to 456 (PEGITDPLETLPVYTN) are periplasmic. Residues 457-477 (VFGKIGITTFIVAIIMAITVP) form a helical membrane-spanning segment. The Cytoplasmic portion of the chain corresponds to 478–489 (LLNRMMNGKQKA).

The protein belongs to the major facilitator superfamily. Proton-dependent oligopeptide transporter (POT/PTR) (TC 2.A.17) family. DtpB subfamily.

It localises to the cell inner membrane. Proton-dependent permease that transports di- and tripeptides. In Photorhabdus asymbiotica subsp. asymbiotica (strain ATCC 43949 / 3105-77) (Xenorhabdus luminescens (strain 2)), this protein is Dipeptide and tripeptide permease B.